The following is a 283-amino-acid chain: Quinate/shikimate dehydrogenase (NAD(+)) (283 aa).

5 residues coordinate shikimate: Ser-17, Thr-69, Lys-73, Asn-94, and Asp-110. L-quinate contacts are provided by residues 17-19, Thr-69, Lys-73, Asn-94, and Asp-110; that span reads SRT. Lys-73 acts as the Proton acceptor in catalysis. NAD(+)-binding positions include 137–138, Asp-158, Arg-163, 203–206, Ala-213, Val-228, and Gly-251; these read GV and PMGM. Residue Gln-258 coordinates shikimate. An L-quinate-binding site is contributed by Gln-258.

This sequence belongs to the shikimate dehydrogenase family. Homodimer.

It carries out the reaction L-quinate + NAD(+) = 3-dehydroquinate + NADH + H(+). The catalysed reaction is shikimate + NAD(+) = 3-dehydroshikimate + NADH + H(+). Its pathway is metabolic intermediate biosynthesis; chorismate biosynthesis; chorismate from D-erythrose 4-phosphate and phosphoenolpyruvate: step 4/7. It functions in the pathway aromatic compound metabolism; 3,4-dihydroxybenzoate biosynthesis; 3-dehydroquinate from D-quinate (NAD(+) route). Involved in the biosynthesis of the chorismate, which leads to the biosynthesis of aromatic amino acids, and plays a key role in the quinate degradation pathway. Catalyzes the NAD(+)-dependent oxidation of both quinate and shikimate to 3-dehydroquinate and 3-dehydroshikimate, respectively. It can only use NAD. The polypeptide is Quinate/shikimate dehydrogenase (NAD(+)) (Corynebacterium glutamicum (strain ATCC 13032 / DSM 20300 / JCM 1318 / BCRC 11384 / CCUG 27702 / LMG 3730 / NBRC 12168 / NCIMB 10025 / NRRL B-2784 / 534)).